The chain runs to 436 residues: Succinyl-CoA:glutarate CoA-transferase (436 aa).

The N-terminal 8 residues, 1 to 8, are a transit peptide targeting the mitochondrion; the sequence is MLWMLARA. Residue Asp-203 is the Nucleophile of the active site. 2 positions are modified to N6-acetyllysine: Lys-392 and Lys-423.

The protein belongs to the CoA-transferase III family.

The protein localises to the mitochondrion. The enzyme catalyses glutarate + succinyl-CoA = glutaryl-CoA + succinate. The catalysed reaction is 3-hydroxy-3-methylglutarate + succinyl-CoA = (3S)-3-hydroxy-3-methylglutaryl-CoA + succinate. It catalyses the reaction 3-hydroxy-3-methylglutarate + glutaryl-CoA = (3S)-3-hydroxy-3-methylglutaryl-CoA + glutarate. It carries out the reaction hexanedioate + glutaryl-CoA = hexanedioyl-CoA + glutarate. The enzyme catalyses itaconate + glutaryl-CoA = itaconyl-CoA + glutarate. The catalysed reaction is itaconate + succinyl-CoA = itaconyl-CoA + succinate. Functionally, coenzyme A (CoA) transferase that reversibly catalyzes the transfer of a CoA moiety from a dicarboxyl-CoA to a dicarboxylate in a metabolite recycling process. Displays preference for succinyl-CoA and glutarate-CoA as dicarboxyl-CoA donors and glutarate, succinate, adipate/hexanedioate, itaconate and 3-hydroxy-3-methylglutarate as dicarboxylate acceptors. Acts on intermediates or end products of lysine and tryptophan degradation pathway, in particular catalyzes succinyl-CoA-dependent reesterification of free glutarate into glutaryl-CoA to prevent renal excretion of glutarate. Upon inflammation, may convert macrophage-derived itaconate to itaconyl-CoA in erythroid precursors where it negatively regulates the TCA cycle and heme synthesis to limit erythroid differentiation in the context of stress erythropoiesis. This is Succinyl-CoA:glutarate CoA-transferase from Mus musculus (Mouse).